The chain runs to 1060 residues: Anoctamin-8 (1060 aa).

A disordered region spans residues 1–32 (MAEAASGAGDVTLEGERGKRPPPEGEPAAPAS). Position 2 is an N-acetylalanine (alanine 2). The Cytoplasmic portion of the chain corresponds to 2–244 (AEAASGAGDV…DDICDYFGVK (243 aa)). Residues 14-23 (EGERGKRPPP) are compositionally biased toward basic and acidic residues. A helical transmembrane segment spans residues 245–265 (IAMYFAWLGFYTSAMVYPAVF). The Extracellular portion of the chain corresponds to 266 to 281 (GSVLYTFTEADQTSRD). A helical transmembrane segment spans residues 282–302 (VSCVVFALFNVIWSTLFLEEW). The Cytoplasmic portion of the chain corresponds to 303-356 (KRRGAELAYKWGTLDSPGEAVEEPRPQFRGIRRISPITRAEEFYYPPWKRLLFQ). At serine 318 the chain carries Phosphoserine. The helical transmembrane segment at 357–377 (LLVSLPLCLACLICVFILMLG) threads the bilayer. The Extracellular portion of the chain corresponds to 378–400 (CFQLQELVLSVKGLPRLVRFLPK). The helical transmembrane segment at 401-421 (VMLALLVSVSAEGYKKLAVWL) threads the bilayer. Residues 422 to 437 (NDMENYRLESTYERHL) lie on the Cytoplasmic side of the membrane. The helical transmembrane segment at 438 to 458 (IIKVVLFQFVNSYLSLFYIGF) threads the bilayer. Residues 459 to 745 (YLKDMDRLKE…YEDTFQDYQE (287 aa)) are Extracellular-facing. 4 disordered regions span residues 529-605 (AQAD…SLLD), 619-640 (GAGR…SPTM), 653-672 (AEED…EPQT), and 680-723 (GEGR…HSPQ). A compositionally biased stretch (gly residues) spans 534-547 (GGAGSRRCLGGGCG). 2 stretches are compositionally biased toward acidic residues: residues 549–559 (PEEENEEEEEA) and 581–602 (EEDE…EEGS). At serine 665 the chain carries Phosphoserine. Positions 680–694 (GEGRDQGPDGDRDTE) are enriched in basic and acidic residues. The N-linked (GlcNAc...) asparagine glycan is linked to asparagine 708. Residues 746 to 766 (MFVQFGYVVLFSSAFPLAALC) form a helical membrane-spanning segment. Over 767–802 (ALVNNLIEIRSDAFKLCTGLQRPFGRRVESIGQWQK) the chain is Cytoplasmic. Serine 796 carries the phosphoserine modification. The helical transmembrane segment at 803–823 (VMEAMGVLAIVVNCYLIGQCG) threads the bilayer. At 824-836 (QLQRLFPWLSPEA) the chain is on the extracellular side. The chain crosses the membrane as a helical span at residues 837–857 (AIVSVVVLEHLALLVKYLIHV). Residues 858–1060 (AIPDIPGWVA…PRPEDAGHRP (203 aa)) lie on the Cytoplasmic side of the membrane. The interval 884-1060 (HERQAQQRFQ…PRPEDAGHRP (177 aa)) is disordered. 2 stretches are compositionally biased toward basic and acidic residues: residues 899-927 (RREE…EARA) and 935-950 (VAER…ERPR). The segment covering 972–986 (TRPPAPTGCAPPPRS) has biased composition (pro residues). Position 991 is an asymmetric dimethylarginine; alternate (arginine 991). Arginine 991 is modified (omega-N-methylarginine; alternate). Arginine 999 is modified (omega-N-methylarginine). The span at 1049 to 1060 (PEPRPEDAGHRP) shows a compositional bias: basic and acidic residues.

Belongs to the anoctamin family. As to expression, predominant expression seen in epithelial tissues.

It is found in the cell membrane. Its function is as follows. Does not exhibit calcium-activated chloride channel (CaCC) activity. The polypeptide is Anoctamin-8 (Ano8) (Mus musculus (Mouse)).